We begin with the raw amino-acid sequence, 515 residues long: Cytosolic Fe-S cluster assembly factor NAR1 homolog (515 aa).

Residues Cys-19, Cys-65, Cys-68, Cys-71, Cys-192, Cys-247, Cys-428, and Cys-432 each contribute to the [4Fe-4S] cluster site.

This sequence belongs to the NARF family.

In terms of biological role, component of the cytosolic Fe/S protein assembly machinery. Required for maturation of extramitochondrial Fe/S proteins. May play a role in the transfer of pre-assembled Fe/S clusters to target apoproteins. The chain is Cytosolic Fe-S cluster assembly factor NAR1 homolog from Schizosaccharomyces japonicus (strain yFS275 / FY16936) (Fission yeast).